The chain runs to 283 residues: MNIEIQYLELCREILAENEQEIAEGRWTPNRTGMGTVGVFGRMLKHDFKEGFPALTTKKLFFNSVKAELLWFLAGRTDLEFLHERGCHIWDKDAARNGGKLGPIYGKQWRAWEGADGRTYDQIAWVIQQIREIAADPERPHPNSRRLVVSPWNVADLEEMALPPCHGPFQFHVKDGRLHLAVWQRSADLFLGVPFNIASYSLLLHMVAQVTGLAVGTYTHYLNDVHIYRNLLDQVRLQLTREPYPLPRLWLNPEVREIDQFTMDDIQLVDYKHHPPIRGELST.

DUMP is bound by residues Arg31 and 145-146 (RR). Cys165 serves as the catalytic Nucleophile. DUMP is bound by residues 185–188 (RSAD), Asn196, and 226–228 (HIY). Position 188 (Asp188) interacts with (6R)-5,10-methylene-5,6,7,8-tetrahydrofolate. Ser282 serves as a coordination point for (6R)-5,10-methylene-5,6,7,8-tetrahydrofolate.

It belongs to the thymidylate synthase family. Bacterial-type ThyA subfamily. Homodimer.

The protein resides in the cytoplasm. It carries out the reaction dUMP + (6R)-5,10-methylene-5,6,7,8-tetrahydrofolate = 7,8-dihydrofolate + dTMP. It functions in the pathway pyrimidine metabolism; dTTP biosynthesis. In terms of biological role, catalyzes the reductive methylation of 2'-deoxyuridine-5'-monophosphate (dUMP) to 2'-deoxythymidine-5'-monophosphate (dTMP) while utilizing 5,10-methylenetetrahydrofolate (mTHF) as the methyl donor and reductant in the reaction, yielding dihydrofolate (DHF) as a by-product. This enzymatic reaction provides an intracellular de novo source of dTMP, an essential precursor for DNA biosynthesis. The protein is Thymidylate synthase of Symbiobacterium thermophilum (strain DSM 24528 / JCM 14929 / IAM 14863 / T).